Here is a 342-residue protein sequence, read N- to C-terminus: Nucleoid-associated protein Shewmr7_2293 (342 aa).

The protein belongs to the YejK family.

The protein localises to the cytoplasm. The protein resides in the nucleoid. This chain is Nucleoid-associated protein Shewmr7_2293, found in Shewanella sp. (strain MR-7).